The following is a 156-amino-acid chain: Cyclic pyranopterin monophosphate synthase (156 aa).

Residues 73-75 (LCH) and 110-111 (ME) contribute to the substrate site. Residue Asp-125 is part of the active site.

It belongs to the MoaC family. Homohexamer; trimer of dimers.

The catalysed reaction is (8S)-3',8-cyclo-7,8-dihydroguanosine 5'-triphosphate = cyclic pyranopterin phosphate + diphosphate. Its pathway is cofactor biosynthesis; molybdopterin biosynthesis. Its function is as follows. Catalyzes the conversion of (8S)-3',8-cyclo-7,8-dihydroguanosine 5'-triphosphate to cyclic pyranopterin monophosphate (cPMP). The polypeptide is Cyclic pyranopterin monophosphate synthase (Pseudomonas putida (strain W619)).